The primary structure comprises 160 residues: Troponin C, skeletal muscle (160 aa).

Thr2 bears the N-acetylthreonine mark. 4 consecutive EF-hand domains span residues 15-50, 51-86, 91-126, and 127-160; these read EMIAEFKAAFDMFDADGGGDISVKELGTVMRMLGQT, PTKEELDAIIEEVDEDGSGTIDFEEFLVMMVRQMKE, KSEEELAECFRIFDRNADGYIDAEELAEIFRASGEH, and VTEEEIESLMKDGDKNNDGRIDFDEFLKMMEGVQ. The Ca(2+) site is built by Asp28, Asp30, Asp34, Glu39, Asp64, Asp66, Ser68, Thr70, Glu75, Asp104, Asn106, Asp108, Tyr110, Glu115, Asp140, Asn142, Asp144, Arg146, and Glu151.

The protein belongs to the troponin C family. In terms of tissue distribution, fast skeletal muscle.

In terms of biological role, troponin is the central regulatory protein of striated muscle contraction. Tn consists of three components: Tn-I which is the inhibitor of actomyosin ATPase, Tn-T which contains the binding site for tropomyosin and Tn-C. The binding of calcium to Tn-C abolishes the inhibitory action of Tn on actin filaments. The polypeptide is Troponin C, skeletal muscle (Tnnc2) (Mus musculus (Mouse)).